A 127-amino-acid chain; its full sequence is uncharacterized protein (127 aa).

Helical transmembrane passes span 64–84 and 101–118; these read GYYI…FGYL and FFHF…AIYY.

Its subcellular location is the membrane. This is an uncharacterized protein from Saccharomyces cerevisiae (strain ATCC 204508 / S288c) (Baker's yeast).